The chain runs to 170 residues: Arginine repressor (170 aa).

The protein belongs to the ArgR family.

The protein resides in the cytoplasm. The protein operates within amino-acid biosynthesis; L-arginine biosynthesis [regulation]. In terms of biological role, regulates arginine biosynthesis genes. This Bifidobacterium longum (strain DJO10A) protein is Arginine repressor.